Reading from the N-terminus, the 203-residue chain is 5-formyltetrahydrofolate cyclo-ligase (203 aa).

N-acetylalanine is present on Ala2. ATP-binding positions include 10 to 14 and Arg14; that span reads KRSLR. Substrate is bound by residues Leu56, Glu61, and 148-152; that span reads RGKGY. 145-153 contacts ATP; sequence RLGRGKGYY. The Mg(2+) site is built by Asp154 and Asp189.

Belongs to the 5-formyltetrahydrofolate cyclo-ligase family. Monomer. It depends on Mg(2+) as a cofactor.

It localises to the cytoplasm. The catalysed reaction is (6S)-5-formyl-5,6,7,8-tetrahydrofolate + ATP = (6R)-5,10-methenyltetrahydrofolate + ADP + phosphate. In terms of biological role, contributes to tetrahydrofolate metabolism. Helps regulate carbon flow through the folate-dependent one-carbon metabolic network that supplies carbon for the biosynthesis of purines, thymidine and amino acids. Catalyzes the irreversible conversion of 5-formyltetrahydrofolate (5-FTHF) to yield 5,10-methenyltetrahydrofolate. The chain is 5-formyltetrahydrofolate cyclo-ligase (MTHFS) from Homo sapiens (Human).